The chain runs to 473 residues: H(+)/Cl(-) exchange transporter ClcA (473 aa).

At 1 to 32 (MKTDTSTFLAQQIVRLRRRDQIRRLMQRDKTP) the chain is on the cytoplasmic side. The helical transmembrane segment at 33 to 69 (LAILFMAAVVGTLTGLVGVAFEKAVSWVQNMRIGALV) threads the bilayer. Residues 70 to 76 (QVADHAF) are Periplasmic-facing. A helical membrane pass occupies residues 77–100 (LLWPLAFILSALLAMVGYFLVRKF). The short motif at 106–110 (GSGIP) is the Selectivity filter part_1 element. Ser107 contributes to the chloride binding site. The helical intramembrane region spans 109–116 (IPEIEGAL). Residues 117 to 123 (EELRPVR) lie on the Cytoplasmic side of the membrane. Helical transmembrane passes span 124 to 141 (WWRV…TLGA) and 148 to 166 (EGPT…LDVF). The Selectivity filter part_2 motif lies at 146-150 (GREGP). The Cytoplasmic portion of the chain corresponds to 167-176 (RMRSAEARHT). Intramembrane regions (helical) lie at residues 177–189 (LLAT…LSAA) and 193–201 (PLAGILFII). Residues 202–214 (EEMRPQFRYNLIS) are Cytoplasmic-facing. The helical transmembrane segment at 215–232 (IKAVFTGVIMSSIVFRIF) threads the bilayer. Over 233-252 (NGEAPIIEVGKLSDAPVNTL) the chain is Periplasmic. The helical transmembrane segment at 253–281 (WLYLILGIIFGCVGPVFNSLVLRTQDMFQ) threads the bilayer. The Cytoplasmic segment spans residues 282-287 (RFHGGE). A helical membrane pass occupies residues 288–309 (IKKWVLMGGAIGGLCGILGLIE). At 310–329 (PEAAGGGFNLIPIAAAGNFS) the chain is on the periplasmic side. 2 consecutive transmembrane segments (helical) span residues 330-349 (VGLL…LCFS) and 355-376 (GIFA…MAAA). The Selectivity filter part_3 signature appears at 355–359 (GIFAP). 2 residues coordinate chloride: Ile356 and Phe357. The Periplasmic portion of the chain corresponds to 377–386 (VLFPQYHLEA). The helical intramembrane region spans 387–401 (GTFAIAGMGALMAAS). Residues 402-404 (VRA) constitute an intramembrane region (note=Loop between two helices). Residues 405–416 (PLTGIVLVLEMT) constitute an intramembrane region (helical). Residues 417 to 421 (DNYQL) constitute an intramembrane region (note=Loop between two helices). Residues 422-438 (ILPMIITCLGATLLAQF) form a helical membrane-spanning segment. Residues 439–473 (LGGKPLYSTILARTLAKQDAEQAAKNQNASAGENT) lie on the Cytoplasmic side of the membrane. Tyr445 lines the chloride pocket.

Belongs to the chloride channel (TC 2.A.49) family. ClcA subfamily. In terms of assembly, homodimer.

Its subcellular location is the cell inner membrane. It catalyses the reaction 2 chloride(in) + H(+)(out) = 2 chloride(out) + H(+)(in). Functionally, proton-coupled chloride transporter. Functions as antiport system and exchanges two chloride ions for 1 proton. Probably acts as an electrical shunt for an outwardly-directed proton pump that is linked to amino acid decarboxylation, as part of the extreme acid resistance (XAR) response. The chain is H(+)/Cl(-) exchange transporter ClcA from Salmonella choleraesuis (strain SC-B67).